A 137-amino-acid polypeptide reads, in one-letter code: Putative pre-16S rRNA nuclease (137 aa).

This sequence belongs to the YqgF nuclease family.

Its subcellular location is the cytoplasm. In terms of biological role, could be a nuclease involved in processing of the 5'-end of pre-16S rRNA. The protein is Putative pre-16S rRNA nuclease of Anaeromyxobacter sp. (strain Fw109-5).